The primary structure comprises 1163 residues: Putative beta-glucuronidase (1163 aa).

A signal peptide spans 1–20 (MPRFLKYILGLFLISISAFG).

This sequence belongs to the glycosyl hydrolase 2 family.

Its subcellular location is the periplasm. The catalysed reaction is a beta-D-glucuronoside + H2O = D-glucuronate + an alcohol. Functionally, glycoside hydrolase involved in ulvan degradation. Ulvan is the main polysaccharide component of the Ulvales (green seaweed) cell wall. It is composed of disaccharide building blocks comprising 3-sulfated rhamnose (Rha3S) linked to D-glucuronic acid (GlcA), L-iduronic acid (IduA), or D-xylose (Xyl). In Formosa agariphila (strain DSM 15362 / KCTC 12365 / LMG 23005 / KMM 3901 / M-2Alg 35-1), this protein is Putative beta-glucuronidase.